A 214-amino-acid chain; its full sequence is MLTVALPKGELLKNSIRLLQSVGLDFSAFLDSGNRQLQITDASGTAKGLLVRGQDVPVYVEYGQAQIGIIGYDVLREKQPQVAHLVDLQFGYCRMSVAVKASSPYKSPLDLPAHSRVASKYVNSAREFFQGLDLPVEIVPLYGSVELGPITGMSEAIVDIVSTGRTLKENGLVEITTLYESTARLIAHPLSYRLNTGNLHQLVEQLREGALTKV.

It belongs to the ATP phosphoribosyltransferase family. Short subfamily. Heteromultimer composed of HisG and HisZ subunits.

It localises to the cytoplasm. The enzyme catalyses 1-(5-phospho-beta-D-ribosyl)-ATP + diphosphate = 5-phospho-alpha-D-ribose 1-diphosphate + ATP. Its pathway is amino-acid biosynthesis; L-histidine biosynthesis; L-histidine from 5-phospho-alpha-D-ribose 1-diphosphate: step 1/9. Catalyzes the condensation of ATP and 5-phosphoribose 1-diphosphate to form N'-(5'-phosphoribosyl)-ATP (PR-ATP). Has a crucial role in the pathway because the rate of histidine biosynthesis seems to be controlled primarily by regulation of HisG enzymatic activity. The chain is ATP phosphoribosyltransferase (hisG) from Nostoc sp. (strain PCC 7120 / SAG 25.82 / UTEX 2576).